The primary structure comprises 211 residues: Superoxide dismutase [Cu-Zn], chloroplastic (211 aa).

Residues 1 to 57 constitute a chloroplast transit peptide; the sequence is MQAILAAAMAAQTLLFSATAPPASLFQSPSSARPFHSLRLAAGPAGAAAARALVVAD. Residues histidine 103, histidine 105, and histidine 120 each contribute to the Cu cation site. Cysteine 114 and cysteine 203 are disulfide-bonded. Zn(2+) contacts are provided by histidine 120, histidine 128, histidine 137, and aspartate 140. Histidine 177 is a Cu cation binding site.

This sequence belongs to the Cu-Zn superoxide dismutase family. As to quaternary structure, homotetramer. The cofactor is Cu cation. Zn(2+) serves as cofactor.

The protein resides in the plastid. It is found in the chloroplast. The enzyme catalyses 2 superoxide + 2 H(+) = H2O2 + O2. Destroys radicals which are normally produced within the cells and which are toxic to biological systems. This is Superoxide dismutase [Cu-Zn], chloroplastic (SODCP) from Oryza sativa subsp. japonica (Rice).